The primary structure comprises 256 residues: Deoxyribose-phosphate aldolase (256 aa).

Asp102 functions as the Proton donor/acceptor in the catalytic mechanism. Lys165 serves as the catalytic Schiff-base intermediate with acetaldehyde. The Proton donor/acceptor role is filled by Lys197.

This sequence belongs to the DeoC/FbaB aldolase family. DeoC type 2 subfamily.

Its subcellular location is the cytoplasm. The enzyme catalyses 2-deoxy-D-ribose 5-phosphate = D-glyceraldehyde 3-phosphate + acetaldehyde. It functions in the pathway carbohydrate degradation; 2-deoxy-D-ribose 1-phosphate degradation; D-glyceraldehyde 3-phosphate and acetaldehyde from 2-deoxy-alpha-D-ribose 1-phosphate: step 2/2. Its function is as follows. Catalyzes a reversible aldol reaction between acetaldehyde and D-glyceraldehyde 3-phosphate to generate 2-deoxy-D-ribose 5-phosphate. This chain is Deoxyribose-phosphate aldolase, found in Shewanella oneidensis (strain ATCC 700550 / JCM 31522 / CIP 106686 / LMG 19005 / NCIMB 14063 / MR-1).